A 343-amino-acid polypeptide reads, in one-letter code: N-acetyl-gamma-glutamyl-phosphate reductase (343 aa).

Residue Cys-149 is part of the active site.

The protein belongs to the NAGSA dehydrogenase family. Type 1 subfamily.

It is found in the cytoplasm. It carries out the reaction N-acetyl-L-glutamate 5-semialdehyde + phosphate + NADP(+) = N-acetyl-L-glutamyl 5-phosphate + NADPH + H(+). It participates in amino-acid biosynthesis; L-arginine biosynthesis; N(2)-acetyl-L-ornithine from L-glutamate: step 3/4. In terms of biological role, catalyzes the NADPH-dependent reduction of N-acetyl-5-glutamyl phosphate to yield N-acetyl-L-glutamate 5-semialdehyde. This chain is N-acetyl-gamma-glutamyl-phosphate reductase, found in Exiguobacterium sibiricum (strain DSM 17290 / CCUG 55495 / CIP 109462 / JCM 13490 / 255-15).